The following is a 327-amino-acid chain: Putative cyclin-dependent kinase F-2 (327 aa).

The 292-residue stretch at 4–295 (YECLGKIGEG…AADALRCAWF (292 aa)) folds into the Protein kinase domain. ATP-binding positions include 10–18 (IGEGAAGVV) and Lys-33. Residue Asp-134 is the Proton acceptor of the active site. Thr-167 is modified (phosphothreonine).

Belongs to the protein kinase superfamily. CMGC Ser/Thr protein kinase family. CDC2/CDKX subfamily.

The catalysed reaction is L-seryl-[protein] + ATP = O-phospho-L-seryl-[protein] + ADP + H(+). The enzyme catalyses L-threonyl-[protein] + ATP = O-phospho-L-threonyl-[protein] + ADP + H(+). It carries out the reaction [DNA-directed RNA polymerase] + ATP = phospho-[DNA-directed RNA polymerase] + ADP + H(+). This Oryza sativa subsp. japonica (Rice) protein is Putative cyclin-dependent kinase F-2 (CDKF-2).